The following is a 154-amino-acid chain: Endoribonuclease YbeY (154 aa).

Positions 114, 118, and 124 each coordinate Zn(2+).

The protein belongs to the endoribonuclease YbeY family. It depends on Zn(2+) as a cofactor.

The protein resides in the cytoplasm. Single strand-specific metallo-endoribonuclease involved in late-stage 70S ribosome quality control and in maturation of the 3' terminus of the 16S rRNA. The chain is Endoribonuclease YbeY from Haemophilus influenzae (strain 86-028NP).